We begin with the raw amino-acid sequence, 186 residues long: ATP synthase subunit delta (186 aa).

The protein belongs to the ATPase delta chain family. As to quaternary structure, F-type ATPases have 2 components, F(1) - the catalytic core - and F(0) - the membrane proton channel. F(1) has five subunits: alpha(3), beta(3), gamma(1), delta(1), epsilon(1). CF(0) has four main subunits: a(1), b(1), b'(1) and c(10-14). The alpha and beta chains form an alternating ring which encloses part of the gamma chain. F(1) is attached to F(0) by a central stalk formed by the gamma and epsilon chains, while a peripheral stalk is formed by the delta, b and b' chains.

The protein resides in the cell inner membrane. Functionally, f(1)F(0) ATP synthase produces ATP from ADP in the presence of a proton or sodium gradient. F-type ATPases consist of two structural domains, F(1) containing the extramembraneous catalytic core and F(0) containing the membrane proton channel, linked together by a central stalk and a peripheral stalk. During catalysis, ATP synthesis in the catalytic domain of F(1) is coupled via a rotary mechanism of the central stalk subunits to proton translocation. This protein is part of the stalk that links CF(0) to CF(1). It either transmits conformational changes from CF(0) to CF(1) or is implicated in proton conduction. This Rhodospirillum rubrum (strain ATCC 11170 / ATH 1.1.1 / DSM 467 / LMG 4362 / NCIMB 8255 / S1) protein is ATP synthase subunit delta.